The primary structure comprises 155 residues: Small ribosomal subunit protein uS7 (155 aa).

It belongs to the universal ribosomal protein uS7 family. Part of the 30S ribosomal subunit. Contacts proteins S9 and S11.

In terms of biological role, one of the primary rRNA binding proteins, it binds directly to 16S rRNA where it nucleates assembly of the head domain of the 30S subunit. Is located at the subunit interface close to the decoding center, probably blocks exit of the E-site tRNA. This is Small ribosomal subunit protein uS7 from Chlorobium phaeobacteroides (strain BS1).